The chain runs to 156 residues: Ribosome maturation factor RimP (156 aa).

It belongs to the RimP family.

The protein localises to the cytoplasm. Functionally, required for maturation of 30S ribosomal subunits. This Anoxybacillus flavithermus (strain DSM 21510 / WK1) protein is Ribosome maturation factor RimP.